Reading from the N-terminus, the 142-residue chain is ATP synthase epsilon chain (142 aa).

It belongs to the ATPase epsilon chain family. F-type ATPases have 2 components, CF(1) - the catalytic core - and CF(0) - the membrane proton channel. CF(1) has five subunits: alpha(3), beta(3), gamma(1), delta(1), epsilon(1). CF(0) has three main subunits: a, b and c.

The protein localises to the cell inner membrane. In terms of biological role, produces ATP from ADP in the presence of a proton gradient across the membrane. The chain is ATP synthase epsilon chain from Mannheimia succiniciproducens (strain KCTC 0769BP / MBEL55E).